The primary structure comprises 349 residues: Mitochondrial carrier protein SCaMC-3L (349 aa).

Helical transmembrane passes span 88–104, 149–168, 188–205, and 243–261; these read GALWKFLLSGAMAGAVS, GNGINVLKIAPEYAIKFSVF, LLAGSLAVATSQTLINPM, and YLPNMLGIIPYACTDLAVY. 2 Solcar repeats span residues 88 to 174 and 182 to 267; these read GALW…CKNY and PPFQ…LNCL.

This sequence belongs to the mitochondrial carrier (TC 2.A.29) family.

It localises to the mitochondrion inner membrane. It catalyses the reaction Mg(2+)(out) + phosphate(in) + ATP(out) = Mg(2+)(in) + phosphate(out) + ATP(in). The catalysed reaction is ADP(out) + phosphate(in) + H(+)(out) = ADP(in) + phosphate(out) + H(+)(in). Its function is as follows. Calcium-independent ATP-Mg/Pi exchanger that catalyzes the electroneutral exchange of Mg-ATP or free ADP against an hydrogenphosphate and participates in the net transport of adenine nucleotides across the mitochondria inner membrane. The protein is Mitochondrial carrier protein SCaMC-3L of Bos taurus (Bovine).